Consider the following 163-residue polypeptide: UPF0262 protein RPB_4349 (163 aa).

The protein belongs to the UPF0262 family.

The protein is UPF0262 protein RPB_4349 of Rhodopseudomonas palustris (strain HaA2).